The chain runs to 96 residues: MPSRGTRPEDSSVLIPTDNSTPHKEDLSSKIKEQKIVVDELSNLKKNRKVYRQQQNSNIFFLADRTEMLSESKNILDELKKEYQEIENLDKTKIKK.

Over residues 1-10 (MPSRGTRPED) the composition is skewed to basic and acidic residues. The segment at 1-28 (MPSRGTRPEDSSVLIPTDNSTPHKEDLS) is disordered. The stretch at 23–96 (HKEDLSSKIK…ENLDKTKIKK (74 aa)) forms a coiled coil.

As to quaternary structure, component of the PAQosome complex which is responsible for the biogenesis of several protein complexes and which consists of R2TP complex members RUVBL1, RUVBL2, RPAP3 and PIH1D1, URI complex members PFDN2, PFDN6, PDRG1, UXT and URI1 as well as ASDURF, POLR2E and DNAAF10/WDR92.

The protein localises to the cytoplasm. The polypeptide is ASNSD1 upstream open reading frame protein (Homo sapiens (Human)).